The chain runs to 415 residues: MHLVPEGSESMSTQQNGSAQKPVTLNGSASTKGQAPEAPLETPGLIQLAICVLGIYASFLSWGVLQEAITTVNFPVRPPTAEEPNPPTERFTFSIVLNTIQSTFAAITGFLYLYFSTPAGKKVPSIFPTRKILFPLLLVSISSSLASPFGYASLAHIDYLTFILAKSCKLLPVMFLHLTIFRKTYPLYKYGVVLLVTLGVATFTLHHPGTSKKVAASAAKNQSGSSLYGIFLLSINLLLDGLTNTTQDHVFSSPQIYTRFTGPQMMVAQNILSTILTTTYLLVMPHLSSTGALHALLPIPIPPSTETELASAVSFLSRHPEVMKNVLGFAACGAIGQLFIFYTLSRFSSLLLVTVTVTRKMLTMLLSVFWFGHTLSAGQWLGIGLVFGGIGAEAVVQKREKQSKEQAKALTGKKE.

The disordered stretch occupies residues 1-39 (MHLVPEGSESMSTQQNGSAQKPVTLNGSASTKGQAPEAP). Positions 9 to 33 (ESMSTQQNGSAQKPVTLNGSASTKG) are enriched in polar residues. 2 N-linked (GlcNAc...) asparagine glycosylation sites follow: N16 and N26. A run of 5 helical transmembrane segments spans residues 45-65 (LIQL…WGVL), 95-115 (IVLN…YLYF), 132-152 (ILFP…FGYA), 161-181 (TFIL…LTIF), and 185-205 (YPLY…TFTL). Residue N221 is glycosylated (N-linked (GlcNAc...) asparagine). A helical membrane pass occupies residues 223–243 (SGSSLYGIFLLSINLLLDGLT). N244 carries an N-linked (GlcNAc...) asparagine glycan. A run of 3 helical transmembrane segments spans residues 281 to 301 (LLVM…PIPI), 325 to 345 (NVLG…YTLS), and 368 to 388 (VFWF…LVFG).

This sequence belongs to the nucleotide-sugar transporter family. SLC35B subfamily.

It is found in the endoplasmic reticulum membrane. In terms of biological role, may be involved in specific transport of UDP-Gal from the cytosol to the Golgi lumen. Involved in the maintenance of optimal conditions for the folding of secretory pathway proteins in the endoplasmic reticulum. The sequence is that of UDP-galactose transporter homolog 1 (hut1) from Aspergillus fumigatus (strain ATCC MYA-4609 / CBS 101355 / FGSC A1100 / Af293) (Neosartorya fumigata).